Reading from the N-terminus, the 156-residue chain is Baculoviral IAP repeat-containing protein 5.2 (156 aa).

One copy of the BIR repeat lies at 30-100 (RLSTFANWPF…KHSPSCLFIA (71 aa)). T46 carries the post-translational modification Phosphothreonine; by CDK1. C69, C72, H89, and C96 together coordinate Zn(2+).

It belongs to the IAP family. In terms of assembly, component of the CPC at least composed of survivin/birc5, incenp, cdca8/borealin and/or cdca9/dasra-A, and aurkb/aurora-B. Interacts directly with incenp (via N-terminus). Interacts with rxra; the interaction is stronger in the absence of 9-cis retinoic acids. Ubiquitination is required for centrosome-targeting.

It is found in the cytoplasm. It localises to the nucleus. The protein localises to the chromosome. Its subcellular location is the centromere. The protein resides in the cytoskeleton. It is found in the spindle. Component of the chromosomal passenger complex (CPC), a complex that acts as a key regulator of mitosis. The CPC complex has essential functions at the centromere in ensuring correct chromosome alignment and segregation and is required for chromatin-induced microtubule stabilization and spindle assembly. Does not appear to exhibit anti-apoptotic activity. Plays a role in increasing blood vessel size during development. This chain is Baculoviral IAP repeat-containing protein 5.2 (birc5.2), found in Xenopus tropicalis (Western clawed frog).